A 500-amino-acid chain; its full sequence is MSSTANSAAHEHAEKTIEADAATGAAEDTSAQLGAERGATRFDIVLGKRGCELAAPVLRAVKCLITGAFLVMRKYSVVVYCATERGLVYVDLGWTIFDQYDFLPGGSDDPLLFSVATPQNGFLLDFLCDPPKKCAQDPVLSARFLVTDSDDPEEARELLKLIVTRESGTSTKIKRAAQTDERIYMPTANSACQVALEPYSHTEITKWLGALPKDAGVKVSISDTALGLERIGCAADSVSFNAQWMDRRADRVTSCDILAKLTGVGPDAGKRSLSARSALKKLKENRVVAVHSGSGWVHSELGWPESVRVRSAQSLKKALQWLKIGAWGVPNLVFYKDKVTGLGVELSGRGEEDLWGCILFFDSEEMDDLTAQEFQEPEDCAEADYGAVSESDDAAAETHRGADGIDGADEEDSCPDMMLISATTLTQQPGRKRAPGATLQQSAQPSSPATHRKQKRPAGAARTGAGDTEQNCVHDGEASLRAPCPASNDDQEPANKRGKR.

Residues 388–500 form a disordered region; that stretch reads VSESDDAAAE…QEPANKRGKR (113 aa). Residues 438–449 show a composition bias toward polar residues; sequence TLQQSAQPSSPA.

It belongs to the herpesviridae DNA polymerase processivity factor family. As to quaternary structure, interacts with the DNA polymerase catalytic subunit UL30. Interacts with the origin-binding protein.

Its subcellular location is the host nucleus. Its function is as follows. Plays an essential role in viral DNA replication by acting as the polymerase accessory subunit. Associates with the viral polymerase to increase its processivity and forms high-affinity direct interactions with DNA. Facilitates the origin-binding protein UL9 loading onto DNA thus increasing its ability to assemble into a functional complex capable of unwinding duplex DNA. The protein is DNA polymerase processivity factor (UL42) of Amazona oratrix (yellow-headed parrot).